The following is a 430-amino-acid chain: S-adenosylmethionine synthase (430 aa).

Histidine 14 is an ATP binding site. Aspartate 16 contacts Mg(2+). A K(+)-binding site is contributed by glutamate 42. L-methionine contacts are provided by glutamate 55 and glutamine 98. The segment at 98–108 (QSADINRGVER) is flexible loop. ATP-binding positions include 164-166 (DAK), 254-255 (KF), aspartate 263, 269-270 (RK), alanine 286, and lysine 290. Aspartate 263 lines the L-methionine pocket. Lysine 294 contacts L-methionine.

This sequence belongs to the AdoMet synthase family. As to quaternary structure, homotetramer; dimer of dimers. Mg(2+) serves as cofactor. Requires K(+) as cofactor.

It is found in the cytoplasm. It catalyses the reaction L-methionine + ATP + H2O = S-adenosyl-L-methionine + phosphate + diphosphate. The protein operates within amino-acid biosynthesis; S-adenosyl-L-methionine biosynthesis; S-adenosyl-L-methionine from L-methionine: step 1/1. Catalyzes the formation of S-adenosylmethionine (AdoMet) from methionine and ATP. The overall synthetic reaction is composed of two sequential steps, AdoMet formation and the subsequent tripolyphosphate hydrolysis which occurs prior to release of AdoMet from the enzyme. This chain is S-adenosylmethionine synthase, found in Phocaeicola vulgatus (strain ATCC 8482 / DSM 1447 / JCM 5826 / CCUG 4940 / NBRC 14291 / NCTC 11154) (Bacteroides vulgatus).